We begin with the raw amino-acid sequence, 103 residues long: Large ribosomal subunit protein bL21 (103 aa).

The protein belongs to the bacterial ribosomal protein bL21 family. In terms of assembly, part of the 50S ribosomal subunit. Contacts protein L20.

Its function is as follows. This protein binds to 23S rRNA in the presence of protein L20. The protein is Large ribosomal subunit protein bL21 of Lactobacillus johnsonii (strain CNCM I-12250 / La1 / NCC 533).